A 107-amino-acid polypeptide reads, in one-letter code: uncharacterized protein (107 aa).

This is an uncharacterized protein from Bacillus subtilis (strain 168).